Reading from the N-terminus, the 1215-residue chain is DNA-directed RNA polymerase subunit beta' (1215 aa).

4 residues coordinate Zn(2+): Cys-60, Cys-62, Cys-75, and Cys-78. Mg(2+) contacts are provided by Asp-450, Asp-452, and Asp-454. Cys-819, Cys-893, Cys-900, and Cys-903 together coordinate Zn(2+).

It belongs to the RNA polymerase beta' chain family. In terms of assembly, the RNAP catalytic core consists of 2 alpha, 1 beta, 1 beta' and 1 omega subunit. When a sigma factor is associated with the core the holoenzyme is formed, which can initiate transcription. Mg(2+) serves as cofactor. The cofactor is Zn(2+).

The catalysed reaction is RNA(n) + a ribonucleoside 5'-triphosphate = RNA(n+1) + diphosphate. Its function is as follows. DNA-dependent RNA polymerase catalyzes the transcription of DNA into RNA using the four ribonucleoside triphosphates as substrates. This is DNA-directed RNA polymerase subunit beta' from Levilactobacillus brevis (strain ATCC 367 / BCRC 12310 / CIP 105137 / JCM 1170 / LMG 11437 / NCIMB 947 / NCTC 947) (Lactobacillus brevis).